Here is a 388-residue protein sequence, read N- to C-terminus: Succinate--CoA ligase [ADP-forming] subunit beta (388 aa).

The region spanning 9–244 (KQLFARYGLP…QSQEDPREAQ (236 aa)) is the ATP-grasp domain. Residues lysine 46, 53–55 (GRG), glutamate 99, threonine 102, and glutamate 107 contribute to the ATP site. The Mg(2+) site is built by asparagine 199 and aspartate 213. Residues asparagine 264 and 321–323 (GIV) contribute to the substrate site.

The protein belongs to the succinate/malate CoA ligase beta subunit family. As to quaternary structure, heterotetramer of two alpha and two beta subunits. Mg(2+) serves as cofactor.

The enzyme catalyses succinate + ATP + CoA = succinyl-CoA + ADP + phosphate. It catalyses the reaction GTP + succinate + CoA = succinyl-CoA + GDP + phosphate. It participates in carbohydrate metabolism; tricarboxylic acid cycle; succinate from succinyl-CoA (ligase route): step 1/1. Its function is as follows. Succinyl-CoA synthetase functions in the citric acid cycle (TCA), coupling the hydrolysis of succinyl-CoA to the synthesis of either ATP or GTP and thus represents the only step of substrate-level phosphorylation in the TCA. The beta subunit provides nucleotide specificity of the enzyme and binds the substrate succinate, while the binding sites for coenzyme A and phosphate are found in the alpha subunit. The sequence is that of Succinate--CoA ligase [ADP-forming] subunit beta from Salmonella dublin (strain CT_02021853).